A 642-amino-acid chain; its full sequence is MPVITLPDGSQRHYDHAVSPMDVALDIGPGLAKACIAGRVNGELVDACDLIENDAQLSIITAKDEEGLEIIRHSCAHLLGHAIKQLWPHTKMAIGPVIDNGFYYDVDLDRTLTQEDVEALEKRMHELAEKNYDVIKKKVSWHEARETFANRGESYKVSILDENIAHDDKPGLYFHEEYVDMCRGPHVPNMRFCHHFKLMKTAGAYWRGDSNNKMLQRIYGTAWADKKALNAYLQRLEEAAKRDHRKIGKQLDLYHMQEEAPGMVFWHNDGWTIFRELEVFVRSKLKEYQYQEVKGPFMMDRVLWEKTGHWDNYKDAMFTTSSENREYCIKPMNCPGHVQIFNQGLKSYRDLPLRMAEFGSCHRNEPSGSLHGLMRVRGFTQDDAHIFCTEEQIRDEVNGCIRLVYDMYSTFGFEKIVVKLSTRPEKRIGSDEMWDRAEADLAVALEENNIPFEYQLGEGAFYGPKIEFTLYDCLDRAWQCGTVQLDFSLPSRLSASYVGEDNERKVPVMIHRAILGSMERFIGILTEEFAGFFPTWLAPVQVVIMNITDSQSEYVNELTQKLSNAGIRVKADLRNEKIGFKIREHTLRRVPYMLVCGDKEVESGKIAVRTRRGKDLGSMDVNEVIEKLQQEIRSRSLKQLEE.

Residues 1-61 (MPVITLPDGS…ENDAQLSIIT (61 aa)) form the TGS domain. The tract at residues 243–534 (DHRKIGKQLD…LTEEFAGFFP (292 aa)) is catalytic. Lys-286 carries the post-translational modification N6-acetyllysine. Zn(2+) is bound by residues Cys-334, His-385, and His-511.

This sequence belongs to the class-II aminoacyl-tRNA synthetase family. Homodimer. Zn(2+) serves as cofactor.

The protein resides in the cytoplasm. It catalyses the reaction tRNA(Thr) + L-threonine + ATP = L-threonyl-tRNA(Thr) + AMP + diphosphate + H(+). Functionally, catalyzes the attachment of threonine to tRNA(Thr) in a two-step reaction: L-threonine is first activated by ATP to form Thr-AMP and then transferred to the acceptor end of tRNA(Thr). Also edits incorrectly charged L-seryl-tRNA(Thr). The sequence is that of Threonine--tRNA ligase from Escherichia coli O157:H7.